Consider the following 143-residue polypeptide: Large ribosomal subunit protein uL11 (143 aa).

This sequence belongs to the universal ribosomal protein uL11 family. In terms of assembly, part of the ribosomal stalk of the 50S ribosomal subunit. Interacts with L10 and the large rRNA to form the base of the stalk. L10 forms an elongated spine to which L12 dimers bind in a sequential fashion forming a multimeric L10(L12)X complex. One or more lysine residues are methylated.

Forms part of the ribosomal stalk which helps the ribosome interact with GTP-bound translation factors. The chain is Large ribosomal subunit protein uL11 from Cupriavidus metallidurans (strain ATCC 43123 / DSM 2839 / NBRC 102507 / CH34) (Ralstonia metallidurans).